A 428-amino-acid chain; its full sequence is C4-dicarboxylate transport protein (428 aa).

Transmembrane regions (helical) follow at residues 8–28 (SLYFQVLTAIAIGILLGHFYP), 44–64 (LIKMIIAPVIFCTVVTGIAGM), 76–96 (VALLYFEIVSTIALIIGLIIV), 142–162 (IGAFASGNILQVLLFAVLFGF), 184–204 (VIFGIINMIMRLAPIGAFGAM), 222–242 (LIICFYITCILFVVLVLGSIA), 326–346 (IVHQITLLIVLLLSSKGAAGV), and 352–372 (IVLAATLSAVGHLPVAGLALI).

This sequence belongs to the dicarboxylate/amino acid:cation symporter (DAACS) (TC 2.A.23) family.

It localises to the cell inner membrane. In terms of biological role, responsible for the transport of dicarboxylates such as succinate, fumarate, and malate from the periplasm across the membrane. The chain is C4-dicarboxylate transport protein from Escherichia coli O139:H28 (strain E24377A / ETEC).